We begin with the raw amino-acid sequence, 303 residues long: Hydroxyethylthiazole kinase (303 aa).

The span at Met-1–Leu-15 shows a compositional bias: polar residues. The disordered stretch occupies residues Met-1–Pro-23. Met-67 serves as a coordination point for substrate. ATP is bound by residues Arg-142 and Ser-206. Residue Gly-233 coordinates substrate.

Belongs to the Thz kinase family. Mg(2+) is required as a cofactor.

It catalyses the reaction 5-(2-hydroxyethyl)-4-methylthiazole + ATP = 4-methyl-5-(2-phosphooxyethyl)-thiazole + ADP + H(+). It participates in cofactor biosynthesis; thiamine diphosphate biosynthesis; 4-methyl-5-(2-phosphoethyl)-thiazole from 5-(2-hydroxyethyl)-4-methylthiazole: step 1/1. Its function is as follows. Catalyzes the phosphorylation of the hydroxyl group of 4-methyl-5-beta-hydroxyethylthiazole (THZ). In Bifidobacterium animalis subsp. lactis (strain AD011), this protein is Hydroxyethylthiazole kinase.